Reading from the N-terminus, the 302-residue chain is Phosphatidylglycerol--prolipoprotein diacylglyceryl transferase (302 aa).

The next 3 membrane-spanning stretches (helical) occupy residues 26-46 (WYAL…VMLV), 67-87 (LVLW…VLFY), and 108-128 (IWEG…AIVL). Arginine 156 contacts a 1,2-diacyl-sn-glycero-3-phospho-(1'-sn-glycerol). Helical transmembrane passes span 231 to 251 (GALV…LEGV) and 263 to 283 (LGLT…VWLL).

This sequence belongs to the Lgt family.

It is found in the cell inner membrane. The catalysed reaction is L-cysteinyl-[prolipoprotein] + a 1,2-diacyl-sn-glycero-3-phospho-(1'-sn-glycerol) = an S-1,2-diacyl-sn-glyceryl-L-cysteinyl-[prolipoprotein] + sn-glycerol 1-phosphate + H(+). It functions in the pathway protein modification; lipoprotein biosynthesis (diacylglyceryl transfer). Catalyzes the transfer of the diacylglyceryl group from phosphatidylglycerol to the sulfhydryl group of the N-terminal cysteine of a prolipoprotein, the first step in the formation of mature lipoproteins. The sequence is that of Phosphatidylglycerol--prolipoprotein diacylglyceryl transferase from Caulobacter sp. (strain K31).